The chain runs to 121 residues: Large ribosomal subunit protein bL12 (121 aa).

It belongs to the bacterial ribosomal protein bL12 family. In terms of assembly, homodimer. Part of the ribosomal stalk of the 50S ribosomal subunit. Forms a multimeric L10(L12)X complex, where L10 forms an elongated spine to which 2 to 4 L12 dimers bind in a sequential fashion. Binds GTP-bound translation factors.

Functionally, forms part of the ribosomal stalk which helps the ribosome interact with GTP-bound translation factors. Is thus essential for accurate translation. This chain is Large ribosomal subunit protein bL12, found in Ureaplasma parvum serovar 3 (strain ATCC 27815 / 27 / NCTC 11736).